The chain runs to 300 residues: Ribonuclease HIII (300 aa).

An RNase H type-2 domain is found at 83-300; that stretch reads IPIIGSDEVG…THKAQALLTK (218 aa). Positions 89, 90, and 194 each coordinate a divalent metal cation.

This sequence belongs to the RNase HII family. RnhC subfamily. Requires Mn(2+) as cofactor. The cofactor is Mg(2+).

Its subcellular location is the cytoplasm. It carries out the reaction Endonucleolytic cleavage to 5'-phosphomonoester.. Its function is as follows. Endonuclease that specifically degrades the RNA of RNA-DNA hybrids. The protein is Ribonuclease HIII of Streptococcus pyogenes serotype M5 (strain Manfredo).